A 565-amino-acid polypeptide reads, in one-letter code: Proline--tRNA ligase (565 aa).

Belongs to the class-II aminoacyl-tRNA synthetase family. ProS type 1 subfamily. Homodimer.

The protein localises to the cytoplasm. The catalysed reaction is tRNA(Pro) + L-proline + ATP = L-prolyl-tRNA(Pro) + AMP + diphosphate. Its function is as follows. Catalyzes the attachment of proline to tRNA(Pro) in a two-step reaction: proline is first activated by ATP to form Pro-AMP and then transferred to the acceptor end of tRNA(Pro). As ProRS can inadvertently accommodate and process non-cognate amino acids such as alanine and cysteine, to avoid such errors it has two additional distinct editing activities against alanine. One activity is designated as 'pretransfer' editing and involves the tRNA(Pro)-independent hydrolysis of activated Ala-AMP. The other activity is designated 'posttransfer' editing and involves deacylation of mischarged Ala-tRNA(Pro). The misacylated Cys-tRNA(Pro) is not edited by ProRS. The sequence is that of Proline--tRNA ligase from Francisella tularensis subsp. mediasiatica (strain FSC147).